We begin with the raw amino-acid sequence, 1722 residues long: Lymphocyte antigen 75 (1722 aa).

The first 27 residues, 1 to 27 (MGTRRVTPGCAAGLLVLLLRCFGLAEP), serve as a signal peptide directing secretion. Over 28–1666 (SEFSGDDSFT…VVCKVPLSPD (1639 aa)) the chain is Extracellular. The Ricin B-type lectin domain occupies 32-182 (GDDSFTIVNE…FLVGETWHHD (151 aa)). N-linked (GlcNAc...) asparagine glycosylation is present at asparagine 135. The Fibronectin type-II domain occupies 164–211 (SYGRPCEFPFLVGETWHHDCIRDENHSGPWCATTLNYEYDQKWGICLK). 4 disulfides stabilise this stretch: cysteine 169–cysteine 194, cysteine 183–cysteine 209, cysteine 247–cysteine 340, and cysteine 317–cysteine 332. In terms of domain architecture, C-type lectin 1 spans 225–341 (QIGSCYQFNN…CEAQQPYVCK (117 aa)). N-linked (GlcNAc...) asparagine glycosylation is found at asparagine 345 and asparagine 377. 3 consecutive C-type lectin domains span residues 368 to 486 (QNGF…YVCK), 493 to 625 (NDTR…ICKK), and 652 to 791 (SNLS…WVCQ). Intrachain disulfides connect cysteine 389–cysteine 485 and cysteine 462–cysteine 477. N-linked (GlcNAc...) asparagine glycosylation occurs at asparagine 529. Disulfide bonds link cysteine 597–cysteine 614, cysteine 678–cysteine 790, and cysteine 752–cysteine 782. N-linked (GlcNAc...) asparagine glycosylation is found at asparagine 843 and asparagine 865. Phosphotyrosine is present on tyrosine 933. Residues asparagine 934 and asparagine 1076 are each glycosylated (N-linked (GlcNAc...) asparagine). C-type lectin domains are found at residues 958–1091 (FQNK…LCQK) and 1110–1222 (YLNN…ICYY). Intrachain disulfides connect cysteine 1060-cysteine 1080 and cysteine 1197-cysteine 1211. N-linked (GlcNAc...) asparagine glycosylation is found at asparagine 1225, asparagine 1320, and asparagine 1392. Residues 1251-1374 (FQNSCYNFMI…VIDETLHFYQ (124 aa)) enclose the C-type lectin 7 domain. 2 consecutive C-type lectin domains span residues 1401 to 1513 (YEDG…ICYK) and 1542 to 1661 (YGDH…VCKV). Cysteine 1488 and cysteine 1502 are disulfide-bonded. 2 N-linked (GlcNAc...) asparagine glycosylation sites follow: asparagine 1593 and asparagine 1626. Cysteine 1635 and cysteine 1650 are disulfide-bonded. A helical membrane pass occupies residues 1667–1691 (YRGIAVLFAVLSVLALISGLIWFLV). Residues 1692 to 1722 (QRNHFRWTGLSSVRYEHGANEDEVMLPSFHD) are Cytoplasmic-facing. Serine 1703 and serine 1719 each carry phosphoserine.

Expressed in the thymus and cultured bone marrow cells.

It is found in the membrane. Functionally, acts as an endocytic receptor to direct captured antigens from the extracellular space to a specialized antigen-processing compartment. Causes reduced proliferation of B lymphocytes. This is Lymphocyte antigen 75 (LY75) from Mesocricetus auratus (Golden hamster).